The chain runs to 639 residues: 1-deoxy-D-xylulose-5-phosphate synthase 1 (639 aa).

Residues His79 and 120–122 (AHS) each bind thiamine diphosphate. Residue Asp155 coordinates Mg(2+). Thiamine diphosphate is bound by residues 156-157 (GA), Asn184, Tyr293, and Glu373. Residue Asn184 coordinates Mg(2+).

The protein belongs to the transketolase family. DXPS subfamily. As to quaternary structure, homodimer. Mg(2+) serves as cofactor. Requires thiamine diphosphate as cofactor.

The enzyme catalyses D-glyceraldehyde 3-phosphate + pyruvate + H(+) = 1-deoxy-D-xylulose 5-phosphate + CO2. It functions in the pathway metabolic intermediate biosynthesis; 1-deoxy-D-xylulose 5-phosphate biosynthesis; 1-deoxy-D-xylulose 5-phosphate from D-glyceraldehyde 3-phosphate and pyruvate: step 1/1. Catalyzes the acyloin condensation reaction between C atoms 2 and 3 of pyruvate and glyceraldehyde 3-phosphate to yield 1-deoxy-D-xylulose-5-phosphate (DXP). This is 1-deoxy-D-xylulose-5-phosphate synthase 1 from Jannaschia sp. (strain CCS1).